The chain runs to 396 residues: 1-deoxy-D-xylulose 5-phosphate reductoisomerase (396 aa).

Residues T14, G15, S16, I17, G40, and N128 each coordinate NADPH. K129 provides a ligand contact to 1-deoxy-D-xylulose 5-phosphate. E130 contacts NADPH. D154 is a Mn(2+) binding site. 1-deoxy-D-xylulose 5-phosphate contacts are provided by S155, E156, S180, and H203. E156 is a binding site for Mn(2+). An NADPH-binding site is contributed by G209. 4 residues coordinate 1-deoxy-D-xylulose 5-phosphate: S216, N221, K222, and E225. Position 225 (E225) interacts with Mn(2+).

This sequence belongs to the DXR family. Requires Mg(2+) as cofactor. The cofactor is Mn(2+).

It carries out the reaction 2-C-methyl-D-erythritol 4-phosphate + NADP(+) = 1-deoxy-D-xylulose 5-phosphate + NADPH + H(+). It functions in the pathway isoprenoid biosynthesis; isopentenyl diphosphate biosynthesis via DXP pathway; isopentenyl diphosphate from 1-deoxy-D-xylulose 5-phosphate: step 1/6. Its function is as follows. Catalyzes the NADPH-dependent rearrangement and reduction of 1-deoxy-D-xylulose-5-phosphate (DXP) to 2-C-methyl-D-erythritol 4-phosphate (MEP). The chain is 1-deoxy-D-xylulose 5-phosphate reductoisomerase from Xylella fastidiosa (strain 9a5c).